The chain runs to 274 residues: Penicillin-insensitive murein endopeptidase (274 aa).

An N-terminal signal peptide occupies residues 1–19 (MKKTAIALLAWFVSSASLA). Disulfide bonds link cysteine 44–cysteine 265, cysteine 187–cysteine 235, and cysteine 216–cysteine 223. Positions 110, 113, 120, 147, 150, and 211 each coordinate Zn(2+). The segment at 225–274 (DQPLPPPGDGCGAELQSWFEPPKPGTTKPEKKTPPPLPPSCQALLDEHVL) is disordered.

This sequence belongs to the peptidase M74 family. In terms of assembly, dimer. Requires Zn(2+) as cofactor.

The protein resides in the periplasm. Functionally, murein endopeptidase that cleaves the D-alanyl-meso-2,6-diamino-pimelyl amide bond that connects peptidoglycan strands. Likely plays a role in the removal of murein from the sacculus. This chain is Penicillin-insensitive murein endopeptidase, found in Salmonella heidelberg (strain SL476).